The chain runs to 354 residues: UPF0496 protein At4g34330 (354 aa).

2 helical membrane-spanning segments follow: residues 200-220 (IIFM…ATMA) and 222-242 (PHVA…GKWI). A coiled-coil region spans residues 270-341 (AVQDLNNIKD…CSTDIRRART (72 aa)).

The protein belongs to the UPF0496 family.

It localises to the membrane. In Arabidopsis thaliana (Mouse-ear cress), this protein is UPF0496 protein At4g34330.